The following is a 179-amino-acid chain: Diphosphoinositol polyphosphate phosphohydrolase 2 (179 aa).

Substrate-binding positions include Arg9, 17-19, and 38-40; these read KKR and SSR. The region spanning 17-143 is the Nudix hydrolase domain; sequence KKRAACLCFR…VHAEYLERLK (127 aa). Mg(2+)-binding residues include Gly49 and Glu65. Positions 50–71 match the Nudix box motif; that stretch reads GGVEPEEEPGGAAAREVYEEAG. The Proton acceptor role is filled by Glu68. Glu69 contributes to the Mg(2+) binding site. Substrate contacts are provided by residues 88 to 90, Arg114, and Lys132; that span reads RKH.

This sequence belongs to the Nudix hydrolase family. DIPP subfamily. Mg(2+) serves as cofactor. The cofactor is Mn(2+).

The protein resides in the cytoplasm. It catalyses the reaction diphospho-myo-inositol polyphosphate + H2O = myo-inositol polyphosphate + phosphate.. The catalysed reaction is 5-diphospho-1D-myo-inositol 1,2,3,4,6-pentakisphosphate + H2O = 1D-myo-inositol hexakisphosphate + phosphate + H(+). The enzyme catalyses 3,5-bis(diphospho)-1D-myo-inositol 1,2,4,6-tetrakisphosphate + H2O = 3-diphospho-1D-myo-inositol 1,2,4,5,6-pentakisphosphate + phosphate + 2 H(+). It carries out the reaction 5-diphospho-1D-myo-inositol 1,3,4,6-tetrakisphosphate + H2O = 1D-myo-inositol 1,3,4,5,6-pentakisphosphate + phosphate + H(+). It catalyses the reaction P(1),P(6)-bis(5'-adenosyl) hexaphosphate + H2O = 2 ATP + 2 H(+). The catalysed reaction is P(1),P(5)-bis(5'-adenosyl) pentaphosphate + H2O = ADP + ATP + 2 H(+). The enzyme catalyses 5-phospho-alpha-D-ribose 1-diphosphate + H2O = alpha-D-ribose 1,5-bisphosphate + phosphate + H(+). In terms of biological role, cleaves the beta-phosphate from diphosphoinositol polyphosphates such as PP-InsP5 (diphosphoinositol pentakisphosphate), PP-InsP4 (diphosphoinositol tetrakisphosphate) and [PP]2-InsP4 (bisdiphosphoinositol tetrakisphosphate), suggesting that it may play a role in signal transduction. Diadenosine polyphosphates, particularly Ap6A (P(1),P(6)-bis(5a-adenosyl) hexaphosphate) and Ap5A (P(1),P(5)-bis(5'-adenosyl) pentaphosphate) are downstream effectors of a signaling cascade that regulates cardiac KATP channels, can also be substrates, although with lower preference than the diphosphoinositol polyphosphates. Can also catalyze the hydrolysis of 5-phosphoribose 1-diphosphate, generating the glycolytic activator ribose 1,5-bisphosphate. Does not play a role in U8 snoRNA decapping activity. Binds U8 snoRNA. This Rattus norvegicus (Rat) protein is Diphosphoinositol polyphosphate phosphohydrolase 2.